We begin with the raw amino-acid sequence, 255 residues long: 1-acyl-sn-glycerol-3-phosphate acyltransferase (255 aa).

An HXXXXD motif motif is present at residues 78–83 (HVSWLD).

The protein belongs to the 1-acyl-sn-glycerol-3-phosphate acyltransferase family.

It is found in the cell inner membrane. The enzyme catalyses a 1-acyl-sn-glycero-3-phosphate + an acyl-CoA = a 1,2-diacyl-sn-glycero-3-phosphate + CoA. The protein operates within phospholipid metabolism; CDP-diacylglycerol biosynthesis; CDP-diacylglycerol from sn-glycerol 3-phosphate: step 2/3. Its function is as follows. Converts lysophosphatidic acid (LPA) into phosphatidic acid by incorporating acyl moiety at the 2 position. This chain is 1-acyl-sn-glycerol-3-phosphate acyltransferase (plsC), found in Neisseria meningitidis serogroup B (strain ATCC BAA-335 / MC58).